Reading from the N-terminus, the 224-residue chain is Ribonuclease HII (224 aa).

Residues 36–224 (RGVAGVDEVG…RRSFLRRFLG (189 aa)) form the RNase H type-2 domain. D42, E43, and D138 together coordinate a divalent metal cation.

The protein belongs to the RNase HII family. Mn(2+) serves as cofactor. Mg(2+) is required as a cofactor.

It localises to the cytoplasm. It carries out the reaction Endonucleolytic cleavage to 5'-phosphomonoester.. Its function is as follows. Endonuclease that specifically degrades the RNA of RNA-DNA hybrids. The polypeptide is Ribonuclease HII (Parasynechococcus marenigrum (strain WH8102)).